The sequence spans 244 residues: Phosphoadenosine 5'-phosphosulfate reductase (244 aa).

C239 functions as the Nucleophile; cysteine thiosulfonate intermediate in the catalytic mechanism.

This sequence belongs to the PAPS reductase family. CysH subfamily.

It localises to the cytoplasm. It catalyses the reaction [thioredoxin]-disulfide + sulfite + adenosine 3',5'-bisphosphate + 2 H(+) = [thioredoxin]-dithiol + 3'-phosphoadenylyl sulfate. It functions in the pathway sulfur metabolism; hydrogen sulfide biosynthesis; sulfite from sulfate: step 3/3. Catalyzes the formation of sulfite from phosphoadenosine 5'-phosphosulfate (PAPS) using thioredoxin as an electron donor. The polypeptide is Phosphoadenosine 5'-phosphosulfate reductase (Salmonella newport (strain SL254)).